The following is a 439-amino-acid chain: Maintenance of mitochondrial morphology protein 1 (439 aa).

At 1-76 the chain is on the lumenal side; it reads MSQDLIETTA…NGNTWSFTQG (76 aa). The helical transmembrane segment at 77 to 97 threads the bilayer; it reads LVIGQVSVIFIIIVFVKFFVF. The Cytoplasmic portion of the chain corresponds to 98–439; it reads ADSSSHIPTK…TPGEYVNSNI (342 aa). 3 disordered regions span residues 125 to 145, 309 to 336, and 405 to 425; these read KHSN…SLDS, MNGY…DGGT, and REPV…GTSA. An SMP-LTD domain is found at 165–395; it reads ASESLDWFNV…EPRFQVVRLP (231 aa). 2 stretches are compositionally biased toward low complexity: residues 315-326 and 410-424; these read ENANGDGASSSN and KKTT…NGTS.

The protein belongs to the MMM1 family. As to quaternary structure, homodimer. Component of the ER-mitochondria encounter structure (ERMES) or MDM complex, composed of MMM1, MDM10, MDM12 and MDM34. An MMM1 homodimer associates with one molecule of MDM12 on each side in a pairwise head-to-tail manner, and the SMP-LTD domains of MMM1 and MDM12 generate a continuous hydrophobic tunnel for phospholipid trafficking.

The protein localises to the endoplasmic reticulum membrane. In terms of biological role, component of the ERMES/MDM complex, which serves as a molecular tether to connect the endoplasmic reticulum (ER) and mitochondria. Components of this complex are involved in the control of mitochondrial shape and protein biogenesis, and function in nonvesicular lipid trafficking between the ER and mitochondria. The MDM12-MMM1 subcomplex functions in the major beta-barrel assembly pathway that is responsible for biogenesis of all outer membrane beta-barrel proteins, and acts in a late step after the SAM complex. The MDM10-MDM12-MMM1 subcomplex further acts in the TOM40-specific pathway after the action of the MDM12-MMM1 complex. Essential for establishing and maintaining the structure of mitochondria and maintenance of mtDNA nucleoids. This chain is Maintenance of mitochondrial morphology protein 1, found in Candida albicans (strain SC5314 / ATCC MYA-2876) (Yeast).